The sequence spans 197 residues: Mediator of RNA polymerase II transcription subunit 21 (197 aa).

A disordered region spans residues Pro37–Thr112. Low complexity-rich tracts occupy residues Pro60–Gly70 and Pro90–Pro100. Residues Gly140–Leu183 adopt a coiled-coil conformation.

This sequence belongs to the Mediator complex subunit 21 family. As to quaternary structure, component of the Mediator complex.

Its subcellular location is the nucleus. Its function is as follows. Component of the Mediator complex, a coactivator involved in the regulated transcription of nearly all RNA polymerase II-dependent genes. Mediator functions as a bridge to convey information from gene-specific regulatory proteins to the basal RNA polymerase II transcription machinery. Mediator is recruited to promoters by direct interactions with regulatory proteins and serves as a scaffold for the assembly of a functional preinitiation complex with RNA polymerase II and the general transcription factors. The protein is Mediator of RNA polymerase II transcription subunit 21 (SRB7) of Coccidioides immitis (strain RS) (Valley fever fungus).